The following is a 220-amino-acid chain: Pro-Pro endopeptidase (220 aa).

An N-terminal signal peptide occupies residues 1–26 (MRPSKKLLIAIISIFLISSVPVSAHA). The region spanning 35–220 (KDTLSQIVVF…TYSFLQNLAK (186 aa)) is the ATLF-like domain. Interacts with substrate peptide regions lie at residues 101–103 (KGW) and 117–119 (GGS). Position 142 (histidine 142) interacts with Zn(2+). Glutamate 143 (proton acceptor) is an active-site residue. The Zn(2+) site is built by histidine 146, tyrosine 178, and glutamate 185.

This sequence belongs to the peptidase M34 family. Pro-Pro endopeptidase subfamily. Monomer. Zn(2+) serves as cofactor.

The protein localises to the secreted. It catalyses the reaction The enzyme catalyzes the hydrolytic cleavage of peptide bonds between two proline residues.. With respect to regulation, is inhibited by the chelating agent o-phenanthroline in vitro. Zinc-dependent endoprotease with a unique preference for proline residues surrounding the scissile bond. Exhibits a high preference for an asparagine at the P2 position and hydrophobic residues (Val, Ile, Leu) at the P3 position. Efficiently cleaves the LPXTG cell surface proteins CD630_28310 and CD630_32460 at multiple cleavage sites in vivo. Has a role in the regulation of C.difficile adhesion versus motility by cleaving surface adhesion proteins such as the collagen binding protein CD630_28310, and is important for efficient infection. Is also able to cleave fibronectin and fibrinogen in vitro; cleaves at the N-terminus of the beta-chain of fibrinogen. Destabilizes the fibronectin network produced by human fibroblasts. Therefore, may be important in key steps of clostridial pathogenesis by degrading extracellular matrix components associated with the gut epithelial cells. To a lesser extent, IgA1, IgA2, and human HSP 90-beta, but not HSP 90-alpha, are also substrates for the enzyme. Is not active on different collagen types, casein and gelatin. The polypeptide is Pro-Pro endopeptidase (Clostridioides difficile (strain 630) (Peptoclostridium difficile)).